The following is a 498-amino-acid chain: Lysine--tRNA ligase (498 aa).

Mg(2+) is bound by residues Glu-411 and Glu-418.

Belongs to the class-II aminoacyl-tRNA synthetase family. As to quaternary structure, homodimer. It depends on Mg(2+) as a cofactor.

It localises to the cytoplasm. It catalyses the reaction tRNA(Lys) + L-lysine + ATP = L-lysyl-tRNA(Lys) + AMP + diphosphate. The polypeptide is Lysine--tRNA ligase (Enterococcus faecalis (strain ATCC 700802 / V583)).